The sequence spans 160 residues: S-ribosylhomocysteine lyase (160 aa).

H57, H61, and C127 together coordinate Fe cation.

It belongs to the LuxS family. In terms of assembly, homodimer. It depends on Fe cation as a cofactor.

It carries out the reaction S-(5-deoxy-D-ribos-5-yl)-L-homocysteine = (S)-4,5-dihydroxypentane-2,3-dione + L-homocysteine. Involved in the synthesis of autoinducer 2 (AI-2) which is secreted by bacteria and is used to communicate both the cell density and the metabolic potential of the environment. The regulation of gene expression in response to changes in cell density is called quorum sensing. Catalyzes the transformation of S-ribosylhomocysteine (RHC) to homocysteine (HC) and 4,5-dihydroxy-2,3-pentadione (DPD). This chain is S-ribosylhomocysteine lyase, found in Streptococcus suis (strain 98HAH33).